The following is a 721-amino-acid chain: Polyribonucleotide nucleotidyltransferase (721 aa).

Mg(2+)-binding residues include Asp-495 and Asp-501. A KH domain is found at 562-621 (PRITTIKIRPERIKDIIGPGGKTIKDITARTGTSINIEDDGSVSIASPNQDKVEEAIKMI). Residues 631-699 (GRIYLGTVRK…RSGKIRLSRK (69 aa)) enclose the S1 motif domain. Residues 699-721 (KEALADSAKKSEGTEPPKGEPAK) form a disordered region.

It belongs to the polyribonucleotide nucleotidyltransferase family. Requires Mg(2+) as cofactor.

The protein localises to the cytoplasm. The catalysed reaction is RNA(n+1) + phosphate = RNA(n) + a ribonucleoside 5'-diphosphate. In terms of biological role, involved in mRNA degradation. Catalyzes the phosphorolysis of single-stranded polyribonucleotides processively in the 3'- to 5'-direction. The polypeptide is Polyribonucleotide nucleotidyltransferase (Anaeromyxobacter sp. (strain K)).